A 65-amino-acid polypeptide reads, in one-letter code: Large ribosomal subunit protein bL35 (65 aa).

The protein belongs to the bacterial ribosomal protein bL35 family.

The polypeptide is Large ribosomal subunit protein bL35 (Parabacteroides distasonis (strain ATCC 8503 / DSM 20701 / CIP 104284 / JCM 5825 / NCTC 11152)).